Reading from the N-terminus, the 333-residue chain is Ornithine carbamoyltransferase (333 aa).

Residues 56–59, Arg-107, and 134–137 each bind carbamoyl phosphate; these read STRT and HPTQ. Residues Asn-167, Asp-231, and 235–236 contribute to the L-ornithine site; that span reads SM. Residues 273–274 and Arg-318 each bind carbamoyl phosphate; that span reads CL.

The protein belongs to the aspartate/ornithine carbamoyltransferase superfamily. OTCase family.

The protein localises to the cytoplasm. The catalysed reaction is carbamoyl phosphate + L-ornithine = L-citrulline + phosphate + H(+). It participates in amino-acid degradation; L-arginine degradation via ADI pathway; carbamoyl phosphate from L-arginine: step 2/2. Functionally, reversibly catalyzes the transfer of the carbamoyl group from carbamoyl phosphate (CP) to the N(epsilon) atom of ornithine (ORN) to produce L-citrulline. The protein is Ornithine carbamoyltransferase of Clostridium botulinum (strain Langeland / NCTC 10281 / Type F).